Reading from the N-terminus, the 253-residue chain is tRNA1(Val) (adenine(37)-N6)-methyltransferase (253 aa).

The protein belongs to the methyltransferase superfamily. tRNA (adenine-N(6)-)-methyltransferase family.

The protein localises to the cytoplasm. It carries out the reaction adenosine(37) in tRNA1(Val) + S-adenosyl-L-methionine = N(6)-methyladenosine(37) in tRNA1(Val) + S-adenosyl-L-homocysteine + H(+). Specifically methylates the adenine in position 37 of tRNA(1)(Val) (anticodon cmo5UAC). The protein is tRNA1(Val) (adenine(37)-N6)-methyltransferase of Dickeya chrysanthemi (strain Ech1591) (Dickeya zeae (strain Ech1591)).